Reading from the N-terminus, the 46-residue chain is uncharacterized protein (46 aa).

It is found in the mitochondrion. This is an uncharacterized protein from Saccharomyces cerevisiae (strain ATCC 204508 / S288c) (Baker's yeast).